Reading from the N-terminus, the 287-residue chain is Pyridoxal kinase PdxY (287 aa).

Residues Ser-10 and 45–46 (TQ) each bind substrate. Residues Asp-112, Ala-144, Glu-149, Lys-182, and 209–212 (RPLV) each bind ATP. Residue Asp-224 participates in substrate binding.

Belongs to the pyridoxine kinase family. PdxY subfamily. As to quaternary structure, homodimer. Mg(2+) is required as a cofactor.

It catalyses the reaction pyridoxal + ATP = pyridoxal 5'-phosphate + ADP + H(+). The protein operates within cofactor metabolism; pyridoxal 5'-phosphate salvage; pyridoxal 5'-phosphate from pyridoxal: step 1/1. Its function is as follows. Pyridoxal kinase involved in the salvage pathway of pyridoxal 5'-phosphate (PLP). Catalyzes the phosphorylation of pyridoxal to PLP. This Escherichia coli O157:H7 protein is Pyridoxal kinase PdxY.